We begin with the raw amino-acid sequence, 525 residues long: NAD(P)H-quinone oxidoreductase chain 4 1 (525 aa).

The next 14 membrane-spanning stretches (helical) occupy residues 6–26 (FPWL…IPII), 36–56 (WYAL…FYTS), 91–111 (LIIL…PVTL), 115–135 (LFYF…AVQD), 136–156 (LLLF…LLAI), 169–189 (FILY…TMAF), 212–232 (LLLY…IPLH), 243–263 (TAPA…YALI), 277–297 (FAPV…LTSF), 314–334 (MGFV…GAVL), 335–355 (QMVS…ATYD), 375–397 (IFAM…GFVA), 417–437 (VIVV…LLSM), and 464–484 (VFVI…PKLL).

This sequence belongs to the complex I subunit 4 family.

It is found in the cellular thylakoid membrane. It catalyses the reaction a plastoquinone + NADH + (n+1) H(+)(in) = a plastoquinol + NAD(+) + n H(+)(out). The enzyme catalyses a plastoquinone + NADPH + (n+1) H(+)(in) = a plastoquinol + NADP(+) + n H(+)(out). Its function is as follows. NDH-1 shuttles electrons from NAD(P)H, via FMN and iron-sulfur (Fe-S) centers, to quinones in the respiratory chain. The immediate electron acceptor for the enzyme in this species is believed to be plastoquinone. Couples the redox reaction to proton translocation (for every two electrons transferred, four hydrogen ions are translocated across the cytoplasmic membrane), and thus conserves the redox energy in a proton gradient. The sequence is that of NAD(P)H-quinone oxidoreductase chain 4 1 from Trichormus variabilis (strain ATCC 29413 / PCC 7937) (Anabaena variabilis).